Reading from the N-terminus, the 177-residue chain is Large ribosomal subunit protein uL6 (177 aa).

The protein belongs to the universal ribosomal protein uL6 family. In terms of assembly, part of the 50S ribosomal subunit.

In terms of biological role, this protein binds to the 23S rRNA, and is important in its secondary structure. It is located near the subunit interface in the base of the L7/L12 stalk, and near the tRNA binding site of the peptidyltransferase center. In Pseudoalteromonas atlantica (strain T6c / ATCC BAA-1087), this protein is Large ribosomal subunit protein uL6.